A 107-amino-acid chain; its full sequence is Putative regulatory protein BCG9842_A0044 (107 aa).

Belongs to the RemA family.

The protein is Putative regulatory protein BCG9842_A0044 of Bacillus cereus (strain G9842).